Consider the following 422-residue polypeptide: 26S proteasome non-ATPase regulatory subunit 11 (422 aa).

The residue at position 2 (Ala-2) is an N-acetylalanine. 2 positions are modified to phosphoserine: Ser-14 and Ser-23. The PCI domain maps to 224-392 (DWKTAYSYFY…GVLIIFDEPP (169 aa)). A Glycyl lysine isopeptide (Lys-Gly) (interchain with G-Cter in SUMO2) cross-link involves residue Lys-274.

It belongs to the proteasome subunit S9 family. As to quaternary structure, component of the 19S proteasome regulatory particle complex. The 26S proteasome consists of a 20S core particle (CP) and two 19S regulatory subunits (RP). The regulatory particle is made of a lid composed of 9 subunits including PSMD11, a base containing 6 ATPases and few additional components. In terms of processing, phosphorylated by AMPK.

It localises to the nucleus. It is found in the cytoplasm. Its subcellular location is the cytosol. Its function is as follows. Component of the 26S proteasome, a multiprotein complex involved in the ATP-dependent degradation of ubiquitinated proteins. This complex plays a key role in the maintenance of protein homeostasis by removing misfolded or damaged proteins, which could impair cellular functions, and by removing proteins whose functions are no longer required. Therefore, the proteasome participates in numerous cellular processes, including cell cycle progression, apoptosis, or DNA damage repair. In the complex, PSMD11 is required for proteasome assembly. Plays a key role in increased proteasome activity in embryonic stem cells (ESCs): its high expression in ESCs promotes enhanced assembly of the 26S proteasome, followed by higher proteasome activity. The protein is 26S proteasome non-ATPase regulatory subunit 11 (PSMD11) of Bos taurus (Bovine).